The following is a 430-amino-acid chain: Enolase (430 aa).

Q167 contributes to the (2R)-2-phosphoglycerate binding site. Catalysis depends on E209, which acts as the Proton donor. Mg(2+) contacts are provided by D246, E289, and D316. (2R)-2-phosphoglycerate contacts are provided by K341, R370, S371, and K392. The active-site Proton acceptor is the K341.

Belongs to the enolase family. As to quaternary structure, component of the RNA degradosome, a multiprotein complex involved in RNA processing and mRNA degradation. Requires Mg(2+) as cofactor.

The protein resides in the cytoplasm. It is found in the secreted. The protein localises to the cell surface. It catalyses the reaction (2R)-2-phosphoglycerate = phosphoenolpyruvate + H2O. It functions in the pathway carbohydrate degradation; glycolysis; pyruvate from D-glyceraldehyde 3-phosphate: step 4/5. Catalyzes the reversible conversion of 2-phosphoglycerate (2-PG) into phosphoenolpyruvate (PEP). It is essential for the degradation of carbohydrates via glycolysis. The polypeptide is Enolase (Alteromonas mediterranea (strain DSM 17117 / CIP 110805 / LMG 28347 / Deep ecotype)).